Here is a 748-residue protein sequence, read N- to C-terminus: Translation factor GUF1 homolog 1, mitochondrial (748 aa).

The transit peptide at 1-29 directs the protein to the mitochondrion; that stretch reads MRVGCCLLLKPIRQRLCTASISSRHIMRW. In terms of domain architecture, tr-type G spans 94–276; it reads SHIRNFAVVA…AIIERVPPPT (183 aa). GTP is bound by residues 103–110, 167–171, and 221–224; these read AHVDHGKT, DTPGH, and TKMD.

Belongs to the TRAFAC class translation factor GTPase superfamily. Classic translation factor GTPase family. LepA subfamily.

It localises to the mitochondrion inner membrane. It catalyses the reaction GTP + H2O = GDP + phosphate + H(+). Its function is as follows. Promotes mitochondrial protein synthesis. May act as a fidelity factor of the translation reaction, by catalyzing a one-codon backward translocation of tRNAs on improperly translocated ribosomes. Binds to mitochondrial ribosomes in a GTP-dependent manner. In Trypanosoma cruzi (strain CL Brener), this protein is Translation factor GUF1 homolog 1, mitochondrial.